The chain runs to 611 residues: Dihydroxy-acid dehydratase (611 aa).

Residue D81 coordinates Mg(2+). C122 is a binding site for [2Fe-2S] cluster. Mg(2+)-binding residues include D123 and K124. At K124 the chain carries N6-carboxylysine. C195 is a binding site for [2Fe-2S] cluster. E491 is a binding site for Mg(2+). S517 (proton acceptor) is an active-site residue.

The protein belongs to the IlvD/Edd family. As to quaternary structure, homodimer. [2Fe-2S] cluster serves as cofactor. Mg(2+) is required as a cofactor.

It catalyses the reaction (2R)-2,3-dihydroxy-3-methylbutanoate = 3-methyl-2-oxobutanoate + H2O. It carries out the reaction (2R,3R)-2,3-dihydroxy-3-methylpentanoate = (S)-3-methyl-2-oxopentanoate + H2O. It functions in the pathway amino-acid biosynthesis; L-isoleucine biosynthesis; L-isoleucine from 2-oxobutanoate: step 3/4. Its pathway is amino-acid biosynthesis; L-valine biosynthesis; L-valine from pyruvate: step 3/4. Its function is as follows. Functions in the biosynthesis of branched-chain amino acids. Catalyzes the dehydration of (2R,3R)-2,3-dihydroxy-3-methylpentanoate (2,3-dihydroxy-3-methylvalerate) into 2-oxo-3-methylpentanoate (2-oxo-3-methylvalerate) and of (2R)-2,3-dihydroxy-3-methylbutanoate (2,3-dihydroxyisovalerate) into 2-oxo-3-methylbutanoate (2-oxoisovalerate), the penultimate precursor to L-isoleucine and L-valine, respectively. This Brucella anthropi (strain ATCC 49188 / DSM 6882 / CCUG 24695 / JCM 21032 / LMG 3331 / NBRC 15819 / NCTC 12168 / Alc 37) (Ochrobactrum anthropi) protein is Dihydroxy-acid dehydratase.